We begin with the raw amino-acid sequence, 432 residues long: D-amino acid dehydrogenase (432 aa).

3-17 (VVILGSGVVGVASAW) is a binding site for FAD.

The protein belongs to the DadA oxidoreductase family. It depends on FAD as a cofactor.

The enzyme catalyses a D-alpha-amino acid + A + H2O = a 2-oxocarboxylate + AH2 + NH4(+). It functions in the pathway amino-acid degradation; D-alanine degradation; NH(3) and pyruvate from D-alanine: step 1/1. Oxidative deamination of D-amino acids. This is D-amino acid dehydrogenase from Shigella dysenteriae serotype 1 (strain Sd197).